Here is a 1009-residue protein sequence, read N- to C-terminus: Probable beta-galactosidase B (1009 aa).

The N-terminal stretch at 1 to 21 (MAQLFTKIIVYFLLFASPLLA) is a signal peptide. The N-linked (GlcNAc...) asparagine glycan is linked to Asn28. Tyr85 contacts substrate. Residue Asn95 is glycosylated (N-linked (GlcNAc...) asparagine). Substrate is bound by residues Asn130, Ala131, Glu132, and Asn190. The active-site Proton donor is Glu191. A glycan (N-linked (GlcNAc...) asparagine) is linked at Asn247. Position 260 (Tyr260) interacts with substrate. An intrachain disulfide couples Cys266 to Cys319. Catalysis depends on Glu303, which acts as the Nucleophile. Tyr368 serves as a coordination point for substrate. Residues Asn375, Asn406, Asn427, Asn451, Asn682, Asn740, Asn771, Asn784, Asn826, and Asn883 are each glycosylated (N-linked (GlcNAc...) asparagine).

The protein belongs to the glycosyl hydrolase 35 family.

The protein localises to the secreted. The enzyme catalyses Hydrolysis of terminal non-reducing beta-D-galactose residues in beta-D-galactosides.. Functionally, cleaves beta-linked terminal galactosyl residues from gangliosides, glycoproteins, and glycosaminoglycans. The sequence is that of Probable beta-galactosidase B (lacB) from Talaromyces marneffei (strain ATCC 18224 / CBS 334.59 / QM 7333) (Penicillium marneffei).